The sequence spans 132 residues: Small ribosomal subunit protein uS8 (132 aa).

The protein belongs to the universal ribosomal protein uS8 family. Part of the 30S ribosomal subunit. Contacts proteins S5 and S12.

Functionally, one of the primary rRNA binding proteins, it binds directly to 16S rRNA central domain where it helps coordinate assembly of the platform of the 30S subunit. This is Small ribosomal subunit protein uS8 from Corynebacterium efficiens (strain DSM 44549 / YS-314 / AJ 12310 / JCM 11189 / NBRC 100395).